The following is a 298-amino-acid chain: Tryptophan 2,3-dioxygenase (298 aa).

Substrate contacts are provided by residues 51–55 (FIIQH), tyrosine 113, and arginine 117. Histidine 240 contributes to the heme binding site. Threonine 254 lines the substrate pocket.

Belongs to the tryptophan 2,3-dioxygenase family. Homotetramer. The cofactor is heme.

It carries out the reaction L-tryptophan + O2 = N-formyl-L-kynurenine. Its pathway is amino-acid degradation; L-tryptophan degradation via kynurenine pathway; L-kynurenine from L-tryptophan: step 1/2. In terms of biological role, heme-dependent dioxygenase that catalyzes the oxidative cleavage of the L-tryptophan (L-Trp) pyrrole ring and converts L-tryptophan to N-formyl-L-kynurenine. Catalyzes the oxidative cleavage of the indole moiety. The sequence is that of Tryptophan 2,3-dioxygenase from Xanthomonas euvesicatoria pv. vesicatoria (strain 85-10) (Xanthomonas campestris pv. vesicatoria).